Reading from the N-terminus, the 250-residue chain is Probable transcriptional regulatory protein Cpha266_0538 (250 aa).

The protein belongs to the TACO1 family.

Its subcellular location is the cytoplasm. The chain is Probable transcriptional regulatory protein Cpha266_0538 from Chlorobium phaeobacteroides (strain DSM 266 / SMG 266 / 2430).